We begin with the raw amino-acid sequence, 100 residues long: Aspartyl/glutamyl-tRNA(Asn/Gln) amidotransferase subunit C (100 aa).

Belongs to the GatC family. As to quaternary structure, heterotrimer of A, B and C subunits.

The enzyme catalyses L-glutamyl-tRNA(Gln) + L-glutamine + ATP + H2O = L-glutaminyl-tRNA(Gln) + L-glutamate + ADP + phosphate + H(+). The catalysed reaction is L-aspartyl-tRNA(Asn) + L-glutamine + ATP + H2O = L-asparaginyl-tRNA(Asn) + L-glutamate + ADP + phosphate + 2 H(+). In terms of biological role, allows the formation of correctly charged Asn-tRNA(Asn) or Gln-tRNA(Gln) through the transamidation of misacylated Asp-tRNA(Asn) or Glu-tRNA(Gln) in organisms which lack either or both of asparaginyl-tRNA or glutaminyl-tRNA synthetases. The reaction takes place in the presence of glutamine and ATP through an activated phospho-Asp-tRNA(Asn) or phospho-Glu-tRNA(Gln). The polypeptide is Aspartyl/glutamyl-tRNA(Asn/Gln) amidotransferase subunit C (Rickettsia africae (strain ESF-5)).